Consider the following 257-residue polypeptide: Anamorsin homolog (257 aa).

An N-terminal SAM-like domain region spans residues 1–134; it reads MSDRKNVLFV…KVGSSDKVTL (134 aa). The interval 135–168 is linker; that stretch reads NPEMKENVVSAWKLDDNNSETISEDDLLEADDLI. The [2Fe-2S] cluster site is built by Cys178, Cys187, Cys190, and Cys192. The fe-S binding site A stretch occupies residues 178–192; it reads CATTKKAKACKDCSC. Residues Cys218, Cys221, Cys229, and Cys232 each contribute to the [4Fe-4S] cluster site. 2 consecutive short sequence motifs (cx2C motif) follow at residues 218–221 and 229–232; these read CGSC and CASC. Residues 218-232 are fe-S binding site B; it reads CGSCYLGDAFRCASC.

The protein belongs to the anamorsin family. In terms of assembly, monomer. Requires [2Fe-2S] cluster as cofactor. [4Fe-4S] cluster is required as a cofactor.

It is found in the cytoplasm. Its subcellular location is the mitochondrion intermembrane space. In terms of biological role, component of the cytosolic iron-sulfur (Fe-S) protein assembly (CIA) machinery. Required for the maturation of extramitochondrial Fe-S proteins. Part of an electron transfer chain functioning in an early step of cytosolic Fe-S biogenesis, facilitating the de novo assembly of a [4Fe-4S] cluster on the cytosolic Fe-S scaffold complex. Electrons are transferred from NADPH via a FAD- and FMN-containing diflavin oxidoreductase. Together with the diflavin oxidoreductase, also required for the assembly of the diferric tyrosyl radical cofactor of ribonucleotide reductase (RNR), probably by providing electrons for reduction during radical cofactor maturation in the catalytic small subunit. The protein is Anamorsin homolog of Acyrthosiphon pisum (Pea aphid).